The primary structure comprises 142 residues: Putative pre-16S rRNA nuclease (142 aa).

It belongs to the YqgF nuclease family.

It localises to the cytoplasm. In terms of biological role, could be a nuclease involved in processing of the 5'-end of pre-16S rRNA. This chain is Putative pre-16S rRNA nuclease, found in Azotobacter vinelandii (strain DJ / ATCC BAA-1303).